Reading from the N-terminus, the 278-residue chain is Probable NADP-dependent mannitol dehydrogenase (278 aa).

Isoleucine 45, asparagine 117, and lysine 152 together coordinate NADP(+). Catalysis depends on proton donor residues serine 171 and tyrosine 186. NADP(+) contacts are provided by tyrosine 186, lysine 190, and threonine 220. Lysine 190 functions as the Lowers pKa of active site Tyr in the catalytic mechanism.

It belongs to the short-chain dehydrogenases/reductases (SDR) family. In terms of assembly, homotetramer.

The catalysed reaction is D-mannitol + NADP(+) = D-fructose + NADPH + H(+). Functionally, versatile oxidoreductase that catalyzes the oxidation and reduction of polar as well as non-polar substrates at a very broad pH range. Preferentially oxidizes secondary alcohols. Has highest activity for racemic 2-heptanol and racemic octanol. Is also an efficient reductase for selected substrates. Substrate selectivity was found for medium chain length ketones with the carbonyl function at position C-2. Has highest activities for ribulose and fructose. The enzyme is (R)-selective in the reduction direction and produces exclusively the (R)-enantiomer. The sequence is that of Probable NADP-dependent mannitol dehydrogenase from Yarrowia lipolytica (strain CLIB 122 / E 150) (Yeast).